A 319-amino-acid chain; its full sequence is Glutamyl-Q tRNA(Asp) synthetase (319 aa).

L-glutamate is bound by residues Arg-23–Ser-27 and Glu-59. A 'HIGH' region motif is present at residues Pro-26 to Ser-36. Residues Cys-115, Cys-117, Tyr-139, and Cys-143 each contribute to the Zn(2+) site. 2 residues coordinate L-glutamate: Tyr-197 and Arg-215. The 'KMSKS' region signature appears at Lys-254–Gln-258. Residue Lys-257 participates in ATP binding.

The protein belongs to the class-I aminoacyl-tRNA synthetase family. GluQ subfamily. The cofactor is Zn(2+).

Functionally, catalyzes the tRNA-independent activation of glutamate in presence of ATP and the subsequent transfer of glutamate onto a tRNA(Asp). Glutamate is transferred on the 2-amino-5-(4,5-dihydroxy-2-cyclopenten-1-yl) moiety of the queuosine in the wobble position of the QUC anticodon. The chain is Glutamyl-Q tRNA(Asp) synthetase from Bordetella bronchiseptica (strain ATCC BAA-588 / NCTC 13252 / RB50) (Alcaligenes bronchisepticus).